The following is a 61-amino-acid chain: Conotoxin LiC32 (61 aa).

A signal peptide spans 1-22 (MRCVPVFIILLLLSPSAPSVDA). Positions 23–44 (HPKTKDDVPLASFHDDAKRTLQ) are excised as a propeptide. Cysteine amide is present on Cys60.

This sequence belongs to the conotoxin T superfamily. In terms of processing, contains 2 disulfide bonds that can be either 'C1-C3, C2-C4' or 'C1-C4, C2-C3', since these disulfide connectivities have been observed for conotoxins with cysteine framework V (for examples, see AC P0DQQ7 and AC P81755). Expressed by the venom duct.

The protein resides in the secreted. In terms of biological role, has the ability to interact with the G-protein coupled somatostatin type 3 receptor (SSTR3). The ability was measured in competition binding experiments and the constant of inhibition (Ki) has been evaluated to be 3.5 uM. This chain is Conotoxin LiC32, found in Conus lividus (Livid cone).